The following is a 312-amino-acid chain: Malate dehydrogenase (312 aa).

NAD(+) is bound by residues 12 to 17 (GAGFTG) and Asp-36. Residues Arg-87 and Arg-93 each contribute to the substrate site. Residues Asn-100 and 123–125 (LTN) each bind NAD(+). Asn-125 contacts substrate. The residue at position 149 (Ser-149) is a Phosphoserine. A substrate-binding site is contributed by Arg-156. His-180 serves as the catalytic Proton acceptor.

Belongs to the LDH/MDH superfamily. MDH type 3 family.

It catalyses the reaction (S)-malate + NAD(+) = oxaloacetate + NADH + H(+). Catalyzes the reversible oxidation of malate to oxaloacetate. The chain is Malate dehydrogenase from Geobacillus kaustophilus (strain HTA426).